The following is a 1004-amino-acid chain: NACHT, LRR and PYD domains-containing protein 9C (1004 aa).

The Pyrin domain occupies 1–92; the sequence is MVDSSSYGLL…TMAQIERRDK (92 aa). Residues 143-465 form the NACHT domain; the sequence is ATAVVLGTRG…KQDKDTYHPV (323 aa). 149–156 provides a ligand contact to ATP; it reads GTRGKGKT. LRR repeat units follow at residues 750-770, 779-800, 807-828, 836-857, and 864-884; these read KVKH…MFLC, VLES…HLYE, HLSL…LLCE, TLKE…EISA, and NLKT…KRLC.

The protein belongs to the NLRP family. Oocyte specific.

The protein resides in the cytoplasm. Functionally, may be involved in inflammation. The sequence is that of NACHT, LRR and PYD domains-containing protein 9C (Nlrp9c) from Mus musculus (Mouse).